The sequence spans 93 residues: Large ribosomal subunit protein bL27 (93 aa).

The protein belongs to the bacterial ribosomal protein bL27 family.

This chain is Large ribosomal subunit protein bL27, found in Trichormus variabilis (strain ATCC 29413 / PCC 7937) (Anabaena variabilis).